A 331-amino-acid chain; its full sequence is Biotin synthase (331 aa).

The region spanning 51-278 (QTIQLSTLMS…KSYVRLSAGR (228 aa)) is the Radical SAM core domain. [4Fe-4S] cluster is bound by residues Cys-66, Cys-70, and Cys-73. Positions 110, 141, 201, and 273 each coordinate [2Fe-2S] cluster.

It belongs to the radical SAM superfamily. Biotin synthase family. As to quaternary structure, homodimer. Requires [4Fe-4S] cluster as cofactor. [2Fe-2S] cluster serves as cofactor.

It catalyses the reaction (4R,5S)-dethiobiotin + (sulfur carrier)-SH + 2 reduced [2Fe-2S]-[ferredoxin] + 2 S-adenosyl-L-methionine = (sulfur carrier)-H + biotin + 2 5'-deoxyadenosine + 2 L-methionine + 2 oxidized [2Fe-2S]-[ferredoxin]. The protein operates within cofactor biosynthesis; biotin biosynthesis; biotin from 7,8-diaminononanoate: step 2/2. Functionally, catalyzes the conversion of dethiobiotin (DTB) to biotin by the insertion of a sulfur atom into dethiobiotin via a radical-based mechanism. This is Biotin synthase from Histophilus somni (strain 129Pt) (Haemophilus somnus).